The following is a 92-amino-acid chain: Precursor of CEP12 (92 aa).

The first 30 residues, 1–30 (MVNRDNSIVALSFFMLFLLVLHLHFETTTA), serve as a signal peptide directing secretion. Residues 31–70 (ARKPVRVFGPPSSIEWSPPSPPKDDFEWFEINIYKNIEQT) constitute a propeptide that is removed on maturation. Positions 70–92 (TAFRPTGQGPSQGIGHKDPPGAP) are disordered. 2 positions are modified to hydroxyproline: proline 74 and proline 79. The propeptide occupies 86-92 (KDPPGAP).

This sequence belongs to the C-terminally encoded plant signaling peptide (CEP) family. In terms of assembly, interacts with CEP receptors (e.g. CEPR1 and CEPR2). In terms of processing, the mature small signaling peptide is generated by proteolytic processing of the longer precursor.

The protein localises to the secreted. The protein resides in the extracellular space. It localises to the apoplast. Its function is as follows. Extracellular signaling peptide that may regulate primary root growth rate and systemic nitrogen (N)-demand signaling. The sequence is that of Precursor of CEP12 from Arabidopsis thaliana (Mouse-ear cress).